We begin with the raw amino-acid sequence, 283 residues long: Pantothenate synthetase (283 aa).

34-41 provides a ligand contact to ATP; it reads MGALHDGH. The Proton donor role is filled by histidine 41. Glutamine 65 contributes to the (R)-pantoate binding site. Glutamine 65 lines the beta-alanine pocket. Residue 152-155 participates in ATP binding; it reads GSKD. Residue glutamine 158 participates in (R)-pantoate binding. Residues isoleucine 181 and 189 to 192 each bind ATP; that span reads MSSR.

Belongs to the pantothenate synthetase family. As to quaternary structure, homodimer.

It is found in the cytoplasm. It catalyses the reaction (R)-pantoate + beta-alanine + ATP = (R)-pantothenate + AMP + diphosphate + H(+). The protein operates within cofactor biosynthesis; (R)-pantothenate biosynthesis; (R)-pantothenate from (R)-pantoate and beta-alanine: step 1/1. Its function is as follows. Catalyzes the condensation of pantoate with beta-alanine in an ATP-dependent reaction via a pantoyl-adenylate intermediate. The chain is Pantothenate synthetase from Rhodopseudomonas palustris (strain HaA2).